A 465-amino-acid chain; its full sequence is MNAQLTMEAIGELHGVSHEPVPAPADLLGGSPHARSSVGHRGSHLPPAHPRSMGMASLLDGGSGGSDYHHHHRAPEHSLAGPLHPTMTMACETPPGMSMPTTYTTLTPLQPLPPISTVSDKFPHHHHHHHHHHHPHHHQRLAGNVSGSFTLMRDERGLASMNNLYTPYHKDVAGMGQSLSPLSGSGLGSIHNSQQGLPHYAHPGAAMPTDKMLTPNDFEAHHPAMLGRHGEQHLTPTSAGMVPINGLPPHHPHAHLNAQGHGQLLGTAREPNPSVTGAQVSNGSNSGQMEEINTKEVAQRITTELKRYSIPQAIFAQRVLCRSQGTLSDLLRNPKPWSKLKSGRETFRRMWKWLQEPEFQRMSALRLAACKRKEQEHGKDRGNTPKKPRLVFTDVQRRTLHAIFKENKRPSKELQITISQQLGLELSTVSNFFMNARRRSLDKWQDEGSSNSGNSSSSSSTCTKA.

Disordered stretches follow at residues 15 to 84 (GVSH…GPLH) and 119 to 141 (SDKF…HQRL). Positions 123 to 140 (PHHHHHHHHHHHPHHHQR) are enriched in basic residues. Positions 283 to 369 (GSNSGQMEEI…QRMSALRLAA (87 aa)) form a DNA-binding region, CUT. Positions 385–444 (PKKPRLVFTDVQRRTLHAIFKENKRPSKELQITISQQLGLELSTVSNFFMNARRRSLDKW) form a DNA-binding region, homeobox. The segment at 442 to 465 (DKWQDEGSSNSGNSSSSSSTCTKA) is disordered. The span at 448-465 (GSSNSGNSSSSSSTCTKA) shows a compositional bias: low complexity.

Belongs to the CUT homeobox family. As to quaternary structure, binds DNA as a monomer. As to expression, expressed in liver, brain, spleen and testis.

The protein localises to the nucleus. In terms of biological role, transcriptional activator. Binds the consensus sequence 5'-DHWATTGAYTWWD-3' on a variety of gene promoters such as those of HNF3B and TTR. Important for liver genes transcription. The affinity of HNF-6-alpha and HNF-6-beta for DNA differs depending on the target sequence. This chain is Hepatocyte nuclear factor 6 (Onecut1), found in Rattus norvegicus (Rat).